A 179-amino-acid polypeptide reads, in one-letter code: ATP synthase subunit delta (179 aa).

The protein belongs to the ATPase delta chain family. In terms of assembly, F-type ATPases have 2 components, F(1) - the catalytic core - and F(0) - the membrane proton channel. F(1) has five subunits: alpha(3), beta(3), gamma(1), delta(1), epsilon(1). F(0) has three main subunits: a(1), b(2) and c(10-14). The alpha and beta chains form an alternating ring which encloses part of the gamma chain. F(1) is attached to F(0) by a central stalk formed by the gamma and epsilon chains, while a peripheral stalk is formed by the delta and b chains.

It is found in the cell membrane. Functionally, f(1)F(0) ATP synthase produces ATP from ADP in the presence of a proton or sodium gradient. F-type ATPases consist of two structural domains, F(1) containing the extramembraneous catalytic core and F(0) containing the membrane proton channel, linked together by a central stalk and a peripheral stalk. During catalysis, ATP synthesis in the catalytic domain of F(1) is coupled via a rotary mechanism of the central stalk subunits to proton translocation. This protein is part of the stalk that links CF(0) to CF(1). It either transmits conformational changes from CF(0) to CF(1) or is implicated in proton conduction. The protein is ATP synthase subunit delta of Listeria innocua serovar 6a (strain ATCC BAA-680 / CLIP 11262).